We begin with the raw amino-acid sequence, 239 residues long: MKDTLFNQSLNKRFCFDEKVAHVFDDMLERSIPYYYEMLDLGAYFIAQNLKENLNAKPLIYDLGCSTGNFFIALNQQIQQDIELVGIDNSMPMLKKAQEKLKDFKNARFECMDFLEVEFKEASAFSLLFVLQFVRPMQREVLLKKIYNSLALNGVLLVGEKIMSEDRILDKQMIELYYLYKQNQGYSHNEIAFKREALENVLVPYSLKENIALLESVGFKHVEAVFKWVNFTLLAARKT.

S-adenosyl-L-methionine-binding positions include Tyr35, 64-66, 88-89, and Arg195; these read GCS and DN.

This sequence belongs to the class I-like SAM-binding methyltransferase superfamily. Cx-SAM synthase family. Homodimer.

The catalysed reaction is prephenate + S-adenosyl-L-methionine = carboxy-S-adenosyl-L-methionine + 3-phenylpyruvate + H2O. Catalyzes the conversion of S-adenosyl-L-methionine (SAM) to carboxy-S-adenosyl-L-methionine (Cx-SAM). This Helicobacter pylori (strain G27) protein is Carboxy-S-adenosyl-L-methionine synthase.